A 512-amino-acid chain; its full sequence is Putative ribose/galactose/methyl galactoside import ATP-binding protein 2 (512 aa).

ABC transporter domains are found at residues I14 to Q251 and T262 to E507. G46–S53 is a binding site for ATP.

Belongs to the ABC transporter superfamily. Carbohydrate importer 2 (CUT2) (TC 3.A.1.2) family.

Its subcellular location is the cell inner membrane. The enzyme catalyses D-ribose(out) + ATP + H2O = D-ribose(in) + ADP + phosphate + H(+). The catalysed reaction is D-galactose(out) + ATP + H2O = D-galactose(in) + ADP + phosphate + H(+). Its function is as follows. Part of an ABC transporter complex involved in carbohydrate import. Could be involved in ribose, galactose and/or methyl galactoside import. Responsible for energy coupling to the transport system. This Burkholderia cenocepacia (strain HI2424) protein is Putative ribose/galactose/methyl galactoside import ATP-binding protein 2.